The primary structure comprises 209 residues: MGGSSGDNGASEQARASREAIGLQRAQWNQVMQNLAPYMKVGGPALGELQNLTTLDGQGQALNQFYHSQPFNDLANQARYQHLNAAEATGGLGSTATGNQLAAIAPALGQNWLSGQMQNYGNLVGIGMNAASGQASAGQNYANNVGQLLQNMGAANAAAANSPSGFHRALGGGMAGALTGASIGAMKGSIGGPWGAAIGGGLGLLGSLF.

It belongs to the podoviruses gp7 family.

In terms of biological role, component of the phage injection machinery. Required for injection of the phage DNA into the host. In Acyrthosiphon pisum secondary endosymbiont phage 1 (Bacteriophage APSE-1), this protein is Putative DNA transfer protein p32 (32).